The primary structure comprises 460 residues: Chromosomal replication initiator protein DnaA (460 aa).

Positions 1 to 84 (MAVSLWQQCI…RFDIGSRPSA (84 aa)) are domain I, interacts with DnaA modulators. The segment at 84–123 (AKKPEPAPVAAVRVPSPQTKASVGTAFNTTEPVANTNHRS) is domain II. The tract at residues 124–340 (NINPTYQFDN…GALNRVIANA (217 aa)) is domain III, AAA+ region. ATP is bound by residues Gly168, Gly170, Lys171, and Thr172. Residues 341–460 (NFTGRPITID…YANLIRTLSS (120 aa)) are domain IV, binds dsDNA.

The protein belongs to the DnaA family. In terms of assembly, oligomerizes as a right-handed, spiral filament on DNA at oriC.

The protein localises to the cytoplasm. In terms of biological role, plays an essential role in the initiation and regulation of chromosomal replication. ATP-DnaA binds to the origin of replication (oriC) to initiate formation of the DNA replication initiation complex once per cell cycle. Binds the DnaA box (a 9 base pair repeat at the origin) and separates the double-stranded (ds)DNA. Forms a right-handed helical filament on oriC DNA; dsDNA binds to the exterior of the filament while single-stranded (ss)DNA is stabiized in the filament's interior. The ATP-DnaA-oriC complex binds and stabilizes one strand of the AT-rich DNA unwinding element (DUE), permitting loading of DNA polymerase. After initiation quickly degrades to an ADP-DnaA complex that is not apt for DNA replication. Binds acidic phospholipids. This Shewanella oneidensis (strain ATCC 700550 / JCM 31522 / CIP 106686 / LMG 19005 / NCIMB 14063 / MR-1) protein is Chromosomal replication initiator protein DnaA.